The primary structure comprises 193 residues: Lipid A acyltransferase PagP (193 aa).

An N-terminal signal peptide occupies residues 1-32 (MNGMAVVMIIRKYFLIIALLVMPWLAIPSVSA). Residues His-65, Asp-108, and Ser-109 contribute to the active site.

Belongs to the lipid A palmitoyltransferase family. In terms of assembly, homodimer.

The protein resides in the cell outer membrane. It carries out the reaction a lipid A + a 1,2-diacyl-sn-glycero-3-phosphocholine = a hepta-acyl lipid A + a 2-acyl-sn-glycero-3-phosphocholine. It catalyses the reaction a lipid IVA + a 1,2-diacyl-sn-glycero-3-phosphocholine = a lipid IVB + a 2-acyl-sn-glycero-3-phosphocholine. The catalysed reaction is a lipid IIA + a 1,2-diacyl-sn-glycero-3-phosphocholine = a lipid IIB + a 2-acyl-sn-glycero-3-phosphocholine. Functionally, transfers a fatty acid residue from the sn-1 position of a phospholipid to the N-linked hydroxyfatty acid chain on the proximal unit of lipid A or its precursors. The sequence is that of Lipid A acyltransferase PagP from Salmonella paratyphi C (strain RKS4594).